We begin with the raw amino-acid sequence, 381 residues long: Selenoprotein P (381 aa).

The signal sequence occupies residues 1 to 19; it reads MWRSLGLALALCLLPSGGT. N46 carries an N-linked (GlcNAc...) asparagine glycan. Residue U59 is a non-standard amino acid, selenocysteine. N-linked (GlcNAc...) (complex) asparagine glycosylation is present at N83. N-linked (GlcNAc...) asparagine glycosylation is found at N119, N128, and N174. The disordered stretch occupies residues 200–268; the sequence is TPSPHYHHEH…ENRDMPASED (69 aa). A compositionally biased stretch (basic residues) spans 204–216; it reads HYHHEHHHNHGHQ. Residues 218 to 230 are compositionally biased toward polar residues; that stretch reads LGSSELSENQQPG. The segment covering 243 to 255 has biased composition (basic residues); that stretch reads LHHHHKHKGQHRQ. The residue at position 266 (S266) is a Phosphoserine. Non-standard amino acids (selenocysteine) are located at U300, U318, and U330. N338 is a glycosylation site (N-linked (GlcNAc...) asparagine). Residues U345, U352, U367, U369, U376, and U378 are each a non-standard amino acid (selenocysteine). A disordered region spans residues 355–381; that stretch reads SQQLIPTEASASURUKNQAKKUEUPSN.

The protein belongs to the selenoprotein P family. Post-translationally, phosphorylation sites are present in the extracellular medium. Made in the liver and heart and secreted into the plasma. It is also found in the kidney.

It is found in the secreted. Functionally, might be responsible for some of the extracellular antioxidant defense properties of selenium or might be involved in the transport of selenium. May supply selenium to tissues such as brain and testis. The sequence is that of Selenoprotein P from Homo sapiens (Human).